A 499-amino-acid polypeptide reads, in one-letter code: MESRVIVDAFFRENSLVKHHIDSYDDFVENKIQGIIDEVTGVETEIKGGYKVSFGKVRVTKPINKEADGSVKEITPMEARIRNLAYSAPLYLEMIPLIGEGDEEKTLSPIEVYIGELPVMLGAKICHLSGKSEEDMINYGEDPKDPLGYFIVNGSEKAVVAQEDLIPNRILCEKVEKNNKIVDIAKVFSTRHGFRALCTVERSPDGLLNVSFPGMPSTIPLVILMRALGAESDREIMELISDEPTVVMQLVANLQEAREEHGINTTEDALEHIGKRVAPGQPKEYKLKRAETILCNYLLPHMGIESEKLGAKCKYLGRMAKNSIELYLGSRVEDDKDHYANKRLKLAGDLMEDLFRHSFNQLIKDIKYQLERQAIRNKEPSIQAAVRSDVLTERMRHAMATGNWVGGRTGVSQLLDRTSYLATVSQLRRVVSPLSRSQPHFEARDLHATQWGKICPSETPEGPNCGLVKNLAVMCKVTTDEEDEGIIQLIKEIGLSKDI.

The protein belongs to the RNA polymerase beta chain family. Part of the RNA polymerase complex.

The protein localises to the cytoplasm. It carries out the reaction RNA(n) + a ribonucleoside 5'-triphosphate = RNA(n+1) + diphosphate. In terms of biological role, DNA-dependent RNA polymerase (RNAP) catalyzes the transcription of DNA into RNA using the four ribonucleoside triphosphates as substrates. The Rpo2 subunit (Rpo2N and Rpo2C in this organism) is implicated in DNA promoter recognition and in nucleotide binding. This is DNA-directed RNA polymerase subunit Rpo2N from Methanococcus vannielii (strain ATCC 35089 / DSM 1224 / JCM 13029 / OCM 148 / SB).